A 238-amino-acid polypeptide reads, in one-letter code: Large ribosomal subunit protein uL1 (238 aa).

This sequence belongs to the universal ribosomal protein uL1 family. In terms of assembly, part of the 50S ribosomal subunit.

Binds directly to 23S rRNA. The L1 stalk is quite mobile in the ribosome, and is involved in E site tRNA release. Its function is as follows. Protein L1 is also a translational repressor protein, it controls the translation of the L11 operon by binding to its mRNA. In Frankia casuarinae (strain DSM 45818 / CECT 9043 / HFP020203 / CcI3), this protein is Large ribosomal subunit protein uL1.